The chain runs to 204 residues: Regulatory protein RecX (204 aa).

The segment covering Met1–Thr22 has biased composition (polar residues). Residues Met1–Ser44 form a disordered region.

Belongs to the RecX family.

The protein resides in the cytoplasm. Modulates RecA activity. The chain is Regulatory protein RecX from Mycobacteroides abscessus (strain ATCC 19977 / DSM 44196 / CCUG 20993 / CIP 104536 / JCM 13569 / NCTC 13031 / TMC 1543 / L948) (Mycobacterium abscessus).